We begin with the raw amino-acid sequence, 1154 residues long: Paired amphipathic helix protein pst3 (1154 aa).

2 disordered regions span residues 1 to 71 (MDVM…RSVT) and 91 to 110 (SGKDGSISSQNAEGLSSSSN). The span at 9–27 (DSERDNPGDKVETQSDKNH) shows a compositional bias: basic and acidic residues. 2 stretches are compositionally biased toward polar residues: residues 32 to 45 (SPSQSQSPVNTSLH) and 100 to 110 (QNAEGLSSSSN). The 71-residue stretch at 111–181 (RPLDVNDALS…EGFNTFLPSG (71 aa)) folds into the PAH 1 domain. 2 disordered regions span residues 199–249 (GTPM…STEN) and 321–376 (DNVD…KTSR). Residues 228 to 241 (STSPTDSQPQPSAP) show a composition bias toward low complexity. A PAH 2 domain is found at 252–322 (PRVDFNYAIA…EEFKLFLPDN (71 aa)). 2 stretches are compositionally biased toward polar residues: residues 323–337 (VDSTEPSTPNVQKSP) and 365–376 (AQISRSISKTSR). In terms of domain architecture, PAH 3 spans 403–472 (SPYAATQEEL…LWFSEFIRWS (70 aa)). The interval 797 to 824 (NSNNTNVSFQTDETQTEDETMSDIHPDD) is disordered.

It localises to the nucleus. This is Paired amphipathic helix protein pst3 (pst3) from Schizosaccharomyces pombe (strain 972 / ATCC 24843) (Fission yeast).